The chain runs to 96 residues: Co-chaperonin GroES 1 (96 aa).

The protein belongs to the GroES chaperonin family. In terms of assembly, heptamer of 7 subunits arranged in a ring. Interacts with the chaperonin GroEL.

The protein localises to the cytoplasm. Functionally, together with the chaperonin GroEL, plays an essential role in assisting protein folding. The GroEL-GroES system forms a nano-cage that allows encapsulation of the non-native substrate proteins and provides a physical environment optimized to promote and accelerate protein folding. GroES binds to the apical surface of the GroEL ring, thereby capping the opening of the GroEL channel. In Vibrio vulnificus (strain CMCP6), this protein is Co-chaperonin GroES 1.